Reading from the N-terminus, the 356-residue chain is MAIDENKQKALAAALGQIEKQFGKGSIMRLGEDRSMDVETISTGSLSLDIALGAGGLPMGRIVEIYGPESSGKTTLTLQVIAAAQREGKTCAFIDAEHALDPIYAKKLGVDIDNLLCSQPDTGEQALEICDALTRSGAVDVIIVDSVAALTPKAEIEGEIGDSHMGLAARMMSQAMRKLAGNLKNANTLLIFINQIRMKIGVMFGNPETTTGGNALKFYASVRLDIRRIGAVKDGDVVVGSETRVKVVKNKIAAPFKQAEFQILYGEGININGELVDLGVKHKLIEKAGAWYSYNGDKIGQGKANASNYLKENPAIAAELDKKLREMLLNGGNGEQPVAAATAEFADGADETNEEF.

67-74 contacts ATP; the sequence is GPESSGKT.

The protein belongs to the RecA family.

The protein localises to the cytoplasm. Can catalyze the hydrolysis of ATP in the presence of single-stranded DNA, the ATP-dependent uptake of single-stranded DNA by duplex DNA, and the ATP-dependent hybridization of homologous single-stranded DNAs. It interacts with LexA causing its activation and leading to its autocatalytic cleavage. This Yersinia pestis bv. Antiqua (strain Angola) protein is Protein RecA.